We begin with the raw amino-acid sequence, 144 residues long: Ribonuclease H (144 aa).

One can recognise an RNase H type-1 domain in the interval 1 to 141 (MKKVEIFTDG…ADRLASEAAD (141 aa)). Residues Asp9, Glu47, Asp69, and Asp133 each contribute to the Mg(2+) site.

It belongs to the RNase H family. As to quaternary structure, monomer. Requires Mg(2+) as cofactor.

It localises to the cytoplasm. The enzyme catalyses Endonucleolytic cleavage to 5'-phosphomonoester.. Functionally, endonuclease that specifically degrades the RNA of RNA-DNA hybrids. The sequence is that of Ribonuclease H from Erythrobacter litoralis (strain HTCC2594).